Consider the following 386-residue polypeptide: Lipoyl synthase, mitochondrial (386 aa).

A mitochondrion-targeting transit peptide spans 1–21 (MISRNSILLRRLYPTTIIRTL). [4Fe-4S] cluster is bound by residues Cys-107, Cys-112, Cys-118, Cys-137, Cys-141, Cys-144, and Ser-352. Residues 122 to 341 (KKSEATATIM…RDTALDMGFL (220 aa)) enclose the Radical SAM core domain.

The protein belongs to the radical SAM superfamily. Lipoyl synthase family. The cofactor is [4Fe-4S] cluster.

Its subcellular location is the mitochondrion. It catalyses the reaction [[Fe-S] cluster scaffold protein carrying a second [4Fe-4S](2+) cluster] + N(6)-octanoyl-L-lysyl-[protein] + 2 oxidized [2Fe-2S]-[ferredoxin] + 2 S-adenosyl-L-methionine + 4 H(+) = [[Fe-S] cluster scaffold protein] + N(6)-[(R)-dihydrolipoyl]-L-lysyl-[protein] + 4 Fe(3+) + 2 hydrogen sulfide + 2 5'-deoxyadenosine + 2 L-methionine + 2 reduced [2Fe-2S]-[ferredoxin]. It participates in protein modification; protein lipoylation via endogenous pathway; protein N(6)-(lipoyl)lysine from octanoyl-[acyl-carrier-protein]: step 2/2. Functionally, catalyzes the radical-mediated insertion of two sulfur atoms into the C-6 and C-8 positions of the octanoyl moiety bound to the lipoyl domains of lipoate-dependent enzymes, thereby converting the octanoylated domains into lipoylated derivatives. This chain is Lipoyl synthase, mitochondrial (LAB5), found in Candida albicans (strain SC5314 / ATCC MYA-2876) (Yeast).